A 328-amino-acid polypeptide reads, in one-letter code: Alpha-tubulin N-acetyltransferase 2 (328 aa).

The region spanning Ser-5 to Phe-185 is the N-acetyltransferase domain. Acetyl-CoA is bound by residues Phe-119–Lys-132 and Ser-155–Lys-164. Disordered regions lie at residues Glu-219–Lys-261 and Gly-282–His-328. Over residues Thr-238–Val-248 the composition is skewed to pro residues. The span at Pro-312–His-328 shows a compositional bias: polar residues.

The protein belongs to the acetyltransferase ATAT1 family.

It catalyses the reaction L-lysyl-[alpha-tubulin] + acetyl-CoA = N(6)-acetyl-L-lysyl-[alpha-tubulin] + CoA + H(+). Its function is as follows. Specifically acetylates 'Lys-40' in alpha-tubulin on the lumenal side of microtubules. Promotes microtubule destabilization and accelerates microtubule dynamics; this activity may be independent of acetylation activity. Acetylates alpha-tubulin with a slow enzymatic rate, due to a catalytic site that is not optimized for acetyl transfer. Enters the microtubule through each end and diffuses quickly throughout the lumen of microtubules. Acetylates only long/old microtubules because of its slow acetylation rate since it does not have time to act on dynamically unstable microtubules before the enzyme is released. The sequence is that of Alpha-tubulin N-acetyltransferase 2 from Trypanosoma cruzi (strain CL Brener).